The sequence spans 234 residues: tRNA (guanine-N(1)-)-methyltransferase (234 aa).

S-adenosyl-L-methionine contacts are provided by residues Gly-110 and 134–139; that span reads IGDYVL.

The protein belongs to the RNA methyltransferase TrmD family. In terms of assembly, homodimer.

Its subcellular location is the cytoplasm. It catalyses the reaction guanosine(37) in tRNA + S-adenosyl-L-methionine = N(1)-methylguanosine(37) in tRNA + S-adenosyl-L-homocysteine + H(+). Functionally, specifically methylates guanosine-37 in various tRNAs. This Tropheryma whipplei (strain Twist) (Whipple's bacillus) protein is tRNA (guanine-N(1)-)-methyltransferase.